Reading from the N-terminus, the 307-residue chain is Small ribosomal subunit biogenesis GTPase RsgA (307 aa).

Residues 80–237 enclose the CP-type G domain; sequence KVDLRQAIVS…IVDTPGIKEF (158 aa). GTP is bound by residues 129–132 and 180–188; these read NKID and GQSGVGKSS. Zn(2+)-binding residues include cysteine 261, cysteine 266, histidine 268, and cysteine 274.

This sequence belongs to the TRAFAC class YlqF/YawG GTPase family. RsgA subfamily. In terms of assembly, monomer. Associates with 30S ribosomal subunit, binds 16S rRNA. It depends on Zn(2+) as a cofactor.

It localises to the cytoplasm. Functionally, one of several proteins that assist in the late maturation steps of the functional core of the 30S ribosomal subunit. Helps release RbfA from mature subunits. May play a role in the assembly of ribosomal proteins into the subunit. Circularly permuted GTPase that catalyzes slow GTP hydrolysis, GTPase activity is stimulated by the 30S ribosomal subunit. The sequence is that of Small ribosomal subunit biogenesis GTPase RsgA from Borrelia garinii subsp. bavariensis (strain ATCC BAA-2496 / DSM 23469 / PBi) (Borreliella bavariensis).